Here is a 330-residue protein sequence, read N- to C-terminus: Pseudouridine-5'-phosphate glycosidase (330 aa).

Catalysis depends on glutamate 50, which acts as the Proton donor. Lysine 112 and valine 132 together coordinate substrate. Aspartate 164 lines the Mn(2+) pocket. Substrate is bound at residue 166–168 (SSD). Lysine 185 (nucleophile) is an active-site residue.

This sequence belongs to the pseudouridine-5'-phosphate glycosidase family. In terms of assembly, homotrimer. Requires Mn(2+) as cofactor.

Its subcellular location is the peroxisome. The catalysed reaction is D-ribose 5-phosphate + uracil = psi-UMP + H2O. Its function is as follows. Catalyzes the reversible cleavage of pseudouridine 5'-phosphate (PsiMP) to ribose 5-phosphate and uracil. Functions biologically in the cleavage direction, as part of a pseudouridine degradation pathway. Acts together with the pseudouridine kinase PUKI in the peroxisome to prevent toxic pseudouridine monophosphate accumulation. Can catalyze the formation of pseudouridine 5'-phosphate (reverse reaction) in vitro, with a catalytic efficiency 4 times lower than the hydrolysis reaction. The polypeptide is Pseudouridine-5'-phosphate glycosidase (Arabidopsis thaliana (Mouse-ear cress)).